A 497-amino-acid polypeptide reads, in one-letter code: Cytochrome P450 2D6 (497 aa).

Aspartate 301 is a substrate binding site. A heme-binding site is contributed by cysteine 443.

The protein belongs to the cytochrome P450 family. Heme serves as cofactor.

Its subcellular location is the endoplasmic reticulum membrane. The protein localises to the microsome membrane. The catalysed reaction is (5Z,8Z,11Z,14Z)-eicosatetraenoate + reduced [NADPH--hemoprotein reductase] + O2 = (8R,9S)-epoxy-(5Z,11Z,14Z)-eicosatrienoate + oxidized [NADPH--hemoprotein reductase] + H2O + H(+). It carries out the reaction (5Z,8Z,11Z,14Z)-eicosatetraenoate + reduced [NADPH--hemoprotein reductase] + O2 = (11R,12S)-epoxy-(5Z,8Z,14Z)-eicosatrienoate + oxidized [NADPH--hemoprotein reductase] + H2O + H(+). It catalyses the reaction (5Z,8Z,11Z,14Z)-eicosatetraenoate + reduced [NADPH--hemoprotein reductase] + O2 = (14S,15R)-epoxy-(5Z,8Z,11Z)-eicosatrienoate + oxidized [NADPH--hemoprotein reductase] + H2O + H(+). The enzyme catalyses N-(5Z,8Z,11Z,14Z-eicosatetraenoyl)-ethanolamine + reduced [NADPH--hemoprotein reductase] + O2 = N-(8,9-epoxy-5Z,11Z,14Z-eicosatrienoyl)-ethanolamine + oxidized [NADPH--hemoprotein reductase] + H2O + H(+). The catalysed reaction is N-(5Z,8Z,11Z,14Z-eicosatetraenoyl)-ethanolamine + reduced [NADPH--hemoprotein reductase] + O2 = N-(11,12-epoxy-5Z,8Z,14Z-eicosatrienoyl)-ethanolamine + oxidized [NADPH--hemoprotein reductase] + H2O + H(+). It carries out the reaction N-(5Z,8Z,11Z,14Z-eicosatetraenoyl)-ethanolamine + reduced [NADPH--hemoprotein reductase] + O2 = N-(14,15-epoxy-5Z,8Z,11Z-eicosatrienoyl)-ethanolamine + oxidized [NADPH--hemoprotein reductase] + H2O + H(+). It catalyses the reaction N-(5Z,8Z,11Z,14Z-eicosatetraenoyl)-ethanolamine + reduced [NADPH--hemoprotein reductase] + O2 = N-(20-hydroxy-5Z,8Z,11Z,14Z-eicosatetraenoyl)-ethanolamine + oxidized [NADPH--hemoprotein reductase] + H2O + H(+). The enzyme catalyses (5Z,8Z,11Z,14Z,17Z)-eicosapentaenoate + reduced [NADPH--hemoprotein reductase] + O2 = (17S,18R)-epoxy-(5Z,8Z,11Z,14Z)-eicosatetraenoate + oxidized [NADPH--hemoprotein reductase] + H2O + H(+). The catalysed reaction is (4Z,7Z,10Z,13Z,16Z,19Z)-docosahexaenoate + reduced [NADPH--hemoprotein reductase] + O2 = (19R,20S)-epoxy-(4Z,7Z,10Z,13Z,16Z)-docosapentaenoate + oxidized [NADPH--hemoprotein reductase] + H2O + H(+). It carries out the reaction (4Z,7Z,10Z,13Z,16Z,19Z)-docosahexaenoate + reduced [NADPH--hemoprotein reductase] + O2 = (19S,20R)-epoxy-(4Z,7Z,10Z,13Z,16Z)-docosapentaenoate + oxidized [NADPH--hemoprotein reductase] + H2O + H(+). It catalyses the reaction cholesterol + reduced [NADPH--hemoprotein reductase] + O2 = 25-hydroxycholesterol + oxidized [NADPH--hemoprotein reductase] + H2O + H(+). The enzyme catalyses all-trans-retinol + reduced [NADPH--hemoprotein reductase] + O2 = all-trans-retinal + oxidized [NADPH--hemoprotein reductase] + 2 H2O + H(+). Its pathway is cofactor metabolism; retinol metabolism. The protein operates within lipid metabolism; fatty acid metabolism. It participates in steroid metabolism; cholesterol metabolism. Its function is as follows. A cytochrome P450 monooxygenase involved in the metabolism of fatty acids, steroids and retinoids. Mechanistically, uses molecular oxygen inserting one oxygen atom into a substrate, and reducing the second into a water molecule, with two electrons provided by NADPH via cytochrome P450 reductase (NADPH--hemoprotein reductase). Catalyzes the epoxidation of double bonds of polyunsaturated fatty acids (PUFA). Metabolizes endocannabinoid arachidonoylethanolamide (anandamide) to 20-hydroxyeicosatetraenoic acid ethanolamide (20-HETE-EA) and 8,9-, 11,12-, and 14,15-epoxyeicosatrienoic acid ethanolamides (EpETrE-EAs), potentially modulating endocannabinoid system signaling. Catalyzes the hydroxylation of carbon-hydrogen bonds. Metabolizes cholesterol toward 25-hydroxycholesterol, a physiological regulator of cellular cholesterol homeostasis. Catalyzes the oxidative transformations of all-trans retinol to all-trans retinal, a precursor for the active form all-trans-retinoic acid. Also involved in the oxidative metabolism of drugs such as antiarrhythmics, adrenoceptor antagonists, and tricyclic antidepressants. In Homo sapiens (Human), this protein is Cytochrome P450 2D6.